Reading from the N-terminus, the 267-residue chain is MRKKTSSNKKKQTKKTNNISLRRKLRLIYKKAILGLKIALIIFVCLFVFTKYFAGIKTYLTTNIYQTTTKLGFKLENVIIEGQQNVDEPTILKVLNANKGSPIFALKLDEIRNNLKKNKWIKEVYVSRRLPNTVYIKLFEREPIAIWQINNQLFLVDEEGYEISKNIQPFPHLLHVVGEGANIYAGKLVLELQKYPALMNKTSAAIRLGDRRWDLNLKGNISIKLPEKEFEEALKYVDALNKANKLFNQNYKALDLRDKNKYYIEKY.

The Cytoplasmic portion of the chain corresponds to 1–32 (MRKKTSSNKKKQTKKTNNISLRRKLRLIYKKA). A helical membrane pass occupies residues 33–53 (ILGLKIALIIFVCLFVFTKYF). The Periplasmic portion of the chain corresponds to 54 to 267 (AGIKTYLTTN…DKNKYYIEKY (214 aa)). In terms of domain architecture, POTRA spans 73–141 (FKLENVIIEG…NTVYIKLFER (69 aa)).

Belongs to the FtsQ/DivIB family. FtsQ subfamily.

Its subcellular location is the cell inner membrane. Functionally, essential cell division protein. The protein is Cell division protein FtsQ of Rickettsia felis (strain ATCC VR-1525 / URRWXCal2) (Rickettsia azadi).